We begin with the raw amino-acid sequence, 223 residues long: uncharacterized protein (223 aa).

A run of 4 helical transmembrane segments spans residues 22-42 (LTVG…FVVV), 59-79 (GVAL…ATLI), 85-105 (IFSL…WCSM), and 164-184 (MAWA…SQAF).

The protein belongs to the Rht family.

The protein resides in the cell membrane. This is an uncharacterized protein from Escherichia coli (strain K12).